We begin with the raw amino-acid sequence, 784 residues long: ATP-dependent 6-phosphofructokinase, platelet type (784 aa).

The residue at position 1 (methionine 1) is an N-acetylmethionine. The segment at 1-398 (MSDLDSSSSS…NLNTYKRLAI (398 aa)) is N-terminal catalytic PFK domain 1. Serine 2, serine 6, and serine 20 each carry phosphoserine. Residues glycine 33, 96–97 (RC), and 126–129 (GDGS) contribute to the ATP site. A Mg(2+)-binding site is contributed by aspartate 127. A Phosphoserine modification is found at serine 141. Substrate contacts are provided by residues 172 to 174 (SID), arginine 209, 216 to 218 (MGR), glutamate 272, arginine 300, and 306 to 309 (HVQR). Catalysis depends on aspartate 174, which acts as the Proton acceptor. N6-acetyllysine is present on lysine 394. The segment at 399–410 (KLPDEKIVKSNC) is interdomain linker. Positions 411–784 (NVAVINVGAP…LESLQHHEEL (374 aa)) are C-terminal regulatory PFK domain 2. Residue arginine 480 participates in beta-D-fructose 2,6-bisphosphate binding. Lysine 485 is subject to N6-acetyllysine. Residues 537–541 (TVSNN), arginine 575, 582–584 (MGG), and glutamate 638 contribute to the beta-D-fructose 2,6-bisphosphate site. Serine 539 carries O-linked (GlcNAc) serine glycosylation. A Phosphotyrosine modification is found at tyrosine 650. Beta-D-fructose 2,6-bisphosphate-binding positions include arginine 664 and 670-673 (HMQQ). Lysine 687 bears the N6-acetyllysine mark. Arginine 743 is a binding site for beta-D-fructose 2,6-bisphosphate.

Belongs to the phosphofructokinase type A (PFKA) family. ATP-dependent PFK group I subfamily. Eukaryotic two domain clade 'E' sub-subfamily. As to quaternary structure, homo- and heterotetramers. Phosphofructokinase (PFK) enzyme functions as a tetramer composed of different combinations of 3 types of subunits, called PFKM (M), PFKL (L) and PFKP (P). The composition of the PFK tetramer differs according to the tissue type it is present in. The kinetic and regulatory properties of the tetrameric enzyme are dependent on the subunit composition, hence can vary across tissues. Interacts with ATG4B; promoting phosphorylation of ATG4B. Requires Mg(2+) as cofactor. In terms of processing, glcNAcylation decreases enzyme activity. As to expression, expression is constant during tumor growth and markedly decreases when cell proliferation stops.

The protein resides in the cytoplasm. The enzyme catalyses beta-D-fructose 6-phosphate + ATP = beta-D-fructose 1,6-bisphosphate + ADP + H(+). It functions in the pathway carbohydrate degradation; glycolysis; D-glyceraldehyde 3-phosphate and glycerone phosphate from D-glucose: step 3/4. Its activity is regulated as follows. Allosterically activated by ADP, AMP, or fructose 2,6-bisphosphate, and allosterically inhibited by ATP or citrate. Catalyzes the phosphorylation of D-fructose 6-phosphate to fructose 1,6-bisphosphate by ATP, the first committing step of glycolysis. The polypeptide is ATP-dependent 6-phosphofructokinase, platelet type (Pfkp) (Mus musculus (Mouse)).